A 374-amino-acid chain; its full sequence is tRNA-specific 2-thiouridylase MnmA (374 aa).

Residues 13-20 and Met39 each bind ATP; that span reads GMSGGVDS. The segment at 99-101 is interaction with target base in tRNA; the sequence is NPD. Cys104 (nucleophile) is an active-site residue. Cys104 and Cys201 form a disulfide bridge. Gly128 lines the ATP pocket. The tract at residues 151–153 is interaction with tRNA; the sequence is KDQ. Cys201 (cysteine persulfide intermediate) is an active-site residue. Positions 313–314 are interaction with tRNA; the sequence is RY.

Belongs to the MnmA/TRMU family.

Its subcellular location is the cytoplasm. The enzyme catalyses S-sulfanyl-L-cysteinyl-[protein] + uridine(34) in tRNA + AH2 + ATP = 2-thiouridine(34) in tRNA + L-cysteinyl-[protein] + A + AMP + diphosphate + H(+). Catalyzes the 2-thiolation of uridine at the wobble position (U34) of tRNA, leading to the formation of s(2)U34. This Streptococcus equi subsp. equi (strain 4047) protein is tRNA-specific 2-thiouridylase MnmA.